A 350-amino-acid polypeptide reads, in one-letter code: MPVLHNRISNDELKAKMLAESEPRTTISFYKYFTIASPQQTRDALYQVFTALDVFGRVYLAYEGINAQISVPQSKVETFRQQLYTFDPALDGLRLNIALEDDGKSFWVLRMKVRDRIVADGIDDPSFDASNVGDYLKAADVNAMLDDPDAVFIDMRNHYEYEVGHFENALEIPADTFREQLPKAVEMLREHADKKIVMYCTGGIRCEKASAWMKHNGFNKVWHIEGGIIEYARRARAQGLPVRFIGKNFVFDERMGERISDEVIAHCHQCGAPCDSHTNCKNDGCHLLFIQCPQCASKFNGCCSEQCCEELALPEEEQRRRRAGRENGNKIFNKSRGRLNSKLSIPDPAE.

The Rhodanese domain occupies 146 to 240; that stretch reads DDPDAVFIDM…YARRARAQGL (95 aa). Catalysis depends on Cys-200, which acts as the Cysteine persulfide intermediate. The span at 319 to 328 shows a compositional bias: basic and acidic residues; it reads RRRRAGRENG. A disordered region spans residues 319–350; the sequence is RRRRAGRENGNKIFNKSRGRLNSKLSIPDPAE.

Belongs to the TrhO family.

It catalyses the reaction uridine(34) in tRNA + AH2 + O2 = 5-hydroxyuridine(34) in tRNA + A + H2O. Catalyzes oxygen-dependent 5-hydroxyuridine (ho5U) modification at position 34 in tRNAs. The sequence is that of tRNA uridine(34) hydroxylase from Salmonella paratyphi B (strain ATCC BAA-1250 / SPB7).